The sequence spans 306 residues: Pantothenate kinase (306 aa).

91-98 (GSVAVGKS) is an ATP binding site.

The protein belongs to the prokaryotic pantothenate kinase family.

It is found in the cytoplasm. It catalyses the reaction (R)-pantothenate + ATP = (R)-4'-phosphopantothenate + ADP + H(+). It participates in cofactor biosynthesis; coenzyme A biosynthesis; CoA from (R)-pantothenate: step 1/5. The chain is Pantothenate kinase from Streptococcus thermophilus (strain ATCC BAA-491 / LMD-9).